Consider the following 95-residue polypeptide: Citrate lyase acyl carrier protein (95 aa).

S14 is subject to O-(phosphoribosyl dephospho-coenzyme A)serine.

This sequence belongs to the CitD family. As to quaternary structure, oligomer with a subunit composition of (alpha,beta,gamma)6.

Its subcellular location is the cytoplasm. Functionally, covalent carrier of the coenzyme of citrate lyase. This Haemophilus influenzae (strain PittGG) protein is Citrate lyase acyl carrier protein.